Reading from the N-terminus, the 486-residue chain is Mogroside I-E synthase (486 aa).

Residues Ser-302, Cys-360, Gln-362, Trp-380, Asn-381, Ser-382, Glu-385, Asp-401, and Gln-402 each coordinate UDP-alpha-D-glucose.

It belongs to the UDP-glycosyltransferase family. Highly expressed in young fruits 15 days after anthesis (15-DAA).

It carries out the reaction mogrol + UDP-alpha-D-glucose = mogroside IE + UDP + H(+). The enzyme catalyses mogroside I-A1 + UDP-alpha-D-glucose = mogroside IIE + UDP + H(+). The catalysed reaction is mogroside II-A1 + UDP-alpha-D-glucose = mogroside IIIX + UDP + H(+). It catalyses the reaction mogroside II-A + UDP-alpha-D-glucose = mogroside III + UDP + H(+). Its pathway is secondary metabolite biosynthesis; terpenoid biosynthesis. In terms of biological role, UDP-glycosyltransferase involved in the biosynthesis of cucurbitacin and mogroside tetracyclic triterpene natural products (e.g. siamenoside I and mogrosides IV, V and VI). Cucurbitacins have cytotoxic properties and exhibit deterrent taste as a defense barrier against herbivores. Mogrosides are nonsugar highly oxygenated compounds used as high-intensity zero-calorie sweeteners; they also possess pharmacological properties such as regulating immunity, lowering blood sugar and lipid levels, protecting the liver, and acting as antioxidants and antitumor agents. Catalyzes the C3 primary glucosylation of mogrol, mogroside I-A1, mogroside II-A1 and mogroside II-A. This chain is Mogroside I-E synthase, found in Siraitia grosvenorii (Monk's fruit).